The following is a 300-amino-acid chain: uncharacterized protein (300 aa).

Positions 67–179 (LAFEELEKEK…IAKANELKDS (113 aa)) form a coiled coil. Residues 203–285 (STTASLSQSE…PSSQSTYQQQ (83 aa)) are compositionally biased toward low complexity. A disordered region spans residues 203-300 (STTASLSQSE…KGFFARLFNL (98 aa)).

This is an uncharacterized protein from Staphylococcus epidermidis (strain ATCC 12228 / FDA PCI 1200).